Here is a 70-residue protein sequence, read N- to C-terminus: Neuropeptide SIFamide (70 aa).

Positions 1–22 are cleaved as a signal peptide; it reads MRFIVALCLFAIVMCIIHKAEG. The residue at position 34 (Phe34) is a Phenylalanine amide. Residues 38-70 constitute a propeptide that is removed on maturation; that stretch reads GVVEYDTTGRALSALCEIASETCQAWYQTLENK.

In terms of tissue distribution, expressed in antennal lobe (AL) and gnathal ganglion (GNG) with expression detected in most animals (at protein level). Not expressed in corpora cardiaca (CC) and corpora allata (CA) (at protein level).

The protein resides in the secreted. Functionally, ligand for the neuropeptide SIFamide receptor. The protein is Neuropeptide SIFamide of Agrotis ipsilon (Black cutworm moth).